We begin with the raw amino-acid sequence, 634 residues long: Probable potassium transport system protein Kup 2 (634 aa).

The next 12 membrane-spanning stretches (helical) occupy residues 15–35 (LTLG…LYAF), 55–75 (VLSL…VIFL), 101–121 (WVAV…DAII), 142–162 (GMSQ…LFMF), 173–193 (LFGP…LWHI), 208–228 (AVTF…AVFL), 252–272 (WLSF…ALAL), 303–323 (LVIL…TGAY), 351–371 (IYMP…VLGF), 381–401 (YGIA…LIAW), 408–428 (PVWT…FFGA), and 435–455 (EGGW…FTWL).

It belongs to the HAK/KUP transporter (TC 2.A.72) family.

The protein localises to the cell inner membrane. The enzyme catalyses K(+)(in) + H(+)(in) = K(+)(out) + H(+)(out). Transport of potassium into the cell. Likely operates as a K(+):H(+) symporter. The protein is Probable potassium transport system protein Kup 2 of Novosphingobium aromaticivorans (strain ATCC 700278 / DSM 12444 / CCUG 56034 / CIP 105152 / NBRC 16084 / F199).